The following is a 314-amino-acid chain: MKQYLDLEKYVLENGTQKGDRTGTGTISTFGYQMRFDLQEGFPIMTTKRVPFKLVVSELLWFLHGDTNIRYLLQHNNNIWNEWAFERFVKSDDYKGEDMTDFGLRAERDSAFKEVYQAEMEKFKARILEDEAFANKYGELGNIYGKQWREWKTSQGETIDQLADLIEMIKTNPNSRRLIVSAWNPKDIPNMALPPCHSLFQFYVADGKLSCQLYQRSADIFLGVPFNIASYALLTHLIAREVGLEVGEFIHTMGDAHLYNNHIEQVKEQLSRTPHKLPKLVLSDKPATIFDFDVADISLDGYNPDPAIKAPISV.

Residues Arg-21 and 176–177 (RR) each bind dUMP. The Nucleophile role is filled by Cys-196. DUMP-binding positions include 216-219 (RSAD), Asn-227, and 257-259 (HLY). Asp-219 is a (6R)-5,10-methylene-5,6,7,8-tetrahydrofolate binding site. (6R)-5,10-methylene-5,6,7,8-tetrahydrofolate is bound at residue Ser-313.

It belongs to the thymidylate synthase family. Bacterial-type ThyA subfamily. As to quaternary structure, homodimer.

Its subcellular location is the cytoplasm. The catalysed reaction is dUMP + (6R)-5,10-methylene-5,6,7,8-tetrahydrofolate = 7,8-dihydrofolate + dTMP. The protein operates within pyrimidine metabolism; dTTP biosynthesis. Functionally, catalyzes the reductive methylation of 2'-deoxyuridine-5'-monophosphate (dUMP) to 2'-deoxythymidine-5'-monophosphate (dTMP) while utilizing 5,10-methylenetetrahydrofolate (mTHF) as the methyl donor and reductant in the reaction, yielding dihydrofolate (DHF) as a by-product. This enzymatic reaction provides an intracellular de novo source of dTMP, an essential precursor for DNA biosynthesis. The protein is Thymidylate synthase of Listeria monocytogenes serotype 4b (strain CLIP80459).